The sequence spans 80 residues: uncharacterized protein (80 aa).

The first 15 residues, 1–15, serve as a signal peptide directing secretion; the sequence is MVKLSFTLRFGDVWV.

This is an uncharacterized protein from Archaeoglobus fulgidus (strain ATCC 49558 / DSM 4304 / JCM 9628 / NBRC 100126 / VC-16).